The primary structure comprises 29 residues: Trypsin inhibitor 1 (29 aa).

Disulfide bonds link Cys-3/Cys-20, Cys-10/Cys-22, and Cys-16/Cys-28.

This sequence belongs to the protease inhibitor I7 (squash-type serine protease inhibitor) family.

The protein resides in the secreted. Functionally, inhibits trypsin. In Luffa aegyptiaca (Sponge gourd), this protein is Trypsin inhibitor 1.